A 363-amino-acid chain; its full sequence is Neurogenic differentiation factor 2 (363 aa).

The interval 1–116 is disordered; that stretch reads MLTRLFKEPS…VRRQKANARE (116 aa). Residues 28–44 are compositionally biased toward basic and acidic residues; that stretch reads EDSKTKDEEQERCRLGD. A compositionally biased stretch (acidic residues) spans 64–83; sequence AGEEDYDEDVDEDDCGEEGD. A compositionally biased stretch (basic residues) spans 87–98; it reads PKKRGPKKRKMT. Positions 93–99 match the Nuclear localization signal motif; sequence KKRKMTP. In terms of domain architecture, bHLH spans 107–159; sequence VRRQKANARERTRMHDLNSALDNLLKVVPCYSKTQKLSKIETLRLAKNYIWAL.

In terms of assembly, efficient DNA binding requires dimerization with another bHLH protein. As to expression, in adult, expressed strongly in brain and more weakly in skin, muscle, eye and ovary.

The protein resides in the nucleus. Its function is as follows. Transcriptional regulator. Appears to mediate neuronal differentiation. The sequence is that of Neurogenic differentiation factor 2 from Danio rerio (Zebrafish).